The following is a 507-amino-acid chain: Maturase K (507 aa).

The protein belongs to the intron maturase 2 family. MatK subfamily.

It localises to the plastid. It is found in the chloroplast. In terms of biological role, usually encoded in the trnK tRNA gene intron. Probably assists in splicing its own and other chloroplast group II introns. The chain is Maturase K from Lyonia lucida (Fetterbush).